Consider the following 216-residue polypeptide: Cytochrome c oxidase subunit 2 (216 aa).

Over 1–8 the chain is Mitochondrial intermembrane; sequence LGLQNATS. The chain crosses the membrane as a helical span at residues 9-39; sequence PIMEELIAFHDHALMIIFLISSLVLYIISLM. Over 40 to 53 the chain is Mitochondrial matrix; that stretch reads LTTKLTHTSTMNAQ. The chain crosses the membrane as a helical span at residues 54–81; sequence EIEMIWTILPAVILIMIALPSLRILYMT. At 82–216 the chain is on the mitochondrial intermembrane side; that stretch reads DEFNKPYLTL…FIYFQDFEVW (135 aa). Cu cation-binding residues include histidine 155, cysteine 190, glutamate 192, cysteine 194, histidine 198, and methionine 201. Glutamate 192 contributes to the Mg(2+) binding site.

This sequence belongs to the cytochrome c oxidase subunit 2 family. As to quaternary structure, component of the cytochrome c oxidase (complex IV, CIV), a multisubunit enzyme composed of 14 subunits. The complex is composed of a catalytic core of 3 subunits MT-CO1, MT-CO2 and MT-CO3, encoded in the mitochondrial DNA, and 11 supernumerary subunits COX4I, COX5A, COX5B, COX6A, COX6B, COX6C, COX7A, COX7B, COX7C, COX8 and NDUFA4, which are encoded in the nuclear genome. The complex exists as a monomer or a dimer and forms supercomplexes (SCs) in the inner mitochondrial membrane with NADH-ubiquinone oxidoreductase (complex I, CI) and ubiquinol-cytochrome c oxidoreductase (cytochrome b-c1 complex, complex III, CIII), resulting in different assemblies (supercomplex SCI(1)III(2)IV(1) and megacomplex MCI(2)III(2)IV(2)). Found in a complex with TMEM177, COA6, COX18, COX20, SCO1 and SCO2. Interacts with TMEM177 in a COX20-dependent manner. Interacts with COX20. Interacts with COX16. It depends on Cu cation as a cofactor.

It is found in the mitochondrion inner membrane. It catalyses the reaction 4 Fe(II)-[cytochrome c] + O2 + 8 H(+)(in) = 4 Fe(III)-[cytochrome c] + 2 H2O + 4 H(+)(out). Functionally, component of the cytochrome c oxidase, the last enzyme in the mitochondrial electron transport chain which drives oxidative phosphorylation. The respiratory chain contains 3 multisubunit complexes succinate dehydrogenase (complex II, CII), ubiquinol-cytochrome c oxidoreductase (cytochrome b-c1 complex, complex III, CIII) and cytochrome c oxidase (complex IV, CIV), that cooperate to transfer electrons derived from NADH and succinate to molecular oxygen, creating an electrochemical gradient over the inner membrane that drives transmembrane transport and the ATP synthase. Cytochrome c oxidase is the component of the respiratory chain that catalyzes the reduction of oxygen to water. Electrons originating from reduced cytochrome c in the intermembrane space (IMS) are transferred via the dinuclear copper A center (CU(A)) of subunit 2 and heme A of subunit 1 to the active site in subunit 1, a binuclear center (BNC) formed by heme A3 and copper B (CU(B)). The BNC reduces molecular oxygen to 2 water molecules using 4 electrons from cytochrome c in the IMS and 4 protons from the mitochondrial matrix. This chain is Cytochrome c oxidase subunit 2 (MT-CO2), found in Callimico goeldii (Goeldi's marmoset).